We begin with the raw amino-acid sequence, 402 residues long: Multidrug resistance protein MdtH (402 aa).

At 1 to 12 (MSRVSQARNLGK) the chain is on the cytoplasmic side. Residues 13 to 33 (YFLLIDNMLVVLGFFVVFPLI) form a helical membrane-spanning segment. The Periplasmic segment spans residues 34–98 (SIRFVDQMGW…GFATMGIAHE (65 aa)). The helical transmembrane segment at 99–116 (PWLLWFSCFLSGLGGTLF) threads the bilayer. Topologically, residues 117 to 138 (DPPRSALVVKLIRPEQRGRFFS) are cytoplasmic. A helical transmembrane segment spans residues 139–159 (LLMMQDSAGAVIGALLGSWLL). Topologically, residues 160–164 (QYDFR) are periplasmic. Residues 165-185 (LVCATGAILFILCALFNAWLL) traverse the membrane as a helical segment. Topologically, residues 186-213 (PAWKLSTARTPVREGMRRVMSNKRFVTY) are cytoplasmic. Residues 214-234 (VLTLAGYYMLAVQVMLMLPIM) traverse the membrane as a helical segment. The Periplasmic segment spans residues 235–243 (VNDIAGSPA). The helical transmembrane segment at 244–264 (AVKWMYAIEACLSLTLLYPIA) threads the bilayer. The Cytoplasmic segment spans residues 265–276 (RWSEKRFRLEHR). Residues 277-297 (LMAGLLVMSLSMLPIGMVGNL) traverse the membrane as a helical segment. At 298–299 (QQ) the chain is on the periplasmic side. The helical transmembrane segment at 300 to 320 (LFTLICAFYIGSVIAEPARET) threads the bilayer. The Cytoplasmic segment spans residues 321–339 (LSASPADARARGSYMGFSR). Residues 340–360 (LGLAIGGAISYIGGGWLFDMG) traverse the membrane as a helical segment. Residues 361 to 367 (KALAQPE) lie on the Periplasmic side of the membrane. The chain crosses the membrane as a helical span at residues 368–388 (LPWMMLGIIGFITFLALGWQF). Residues 389–402 (SHKRTPRRMLEPGA) lie on the Cytoplasmic side of the membrane.

Belongs to the major facilitator superfamily. DHA1 family. MdtH (TC 2.A.1.2.21) subfamily.

It localises to the cell inner membrane. The polypeptide is Multidrug resistance protein MdtH (Salmonella typhi).